The sequence spans 307 residues: UDP-N-acetylenolpyruvoylglucosamine reductase (307 aa).

In terms of domain architecture, FAD-binding PCMH-type spans 33 to 197 (TGGNADFYIT…LEAAFTLAPG (165 aa)). Residue arginine 176 is part of the active site. Serine 226 (proton donor) is an active-site residue. The active site involves glutamate 296.

It belongs to the MurB family. It depends on FAD as a cofactor.

It is found in the cytoplasm. It catalyses the reaction UDP-N-acetyl-alpha-D-muramate + NADP(+) = UDP-N-acetyl-3-O-(1-carboxyvinyl)-alpha-D-glucosamine + NADPH + H(+). It participates in cell wall biogenesis; peptidoglycan biosynthesis. Cell wall formation. The polypeptide is UDP-N-acetylenolpyruvoylglucosamine reductase (Staphylococcus aureus (strain COL)).